Here is a 578-residue protein sequence, read N- to C-terminus: Acyl-CoA synthetase ACTT5 (578 aa).

An AMP-binding site is contributed by 211 to 222 (RLTTSGTTGLPK). The interval 472-551 (ELEAALLQAK…DEIPRSPTGK (80 aa)) is AMP-binding.

Belongs to the ATP-dependent AMP-binding enzyme family.

It participates in mycotoxin biosynthesis. In terms of biological role, acyl-CoA synthetase; part of the gene clusters that mediate the biosynthesis of the host-selective toxins (HSTs) ACT-toxins responsible for brown spot of tangerine disease by the tangerine pathotype which affects tangerines and mandarins. ACT-toxins consist of three moieties, 9,10-epoxy-8-hydroxy-9-methyl-decatrienoic acid (EDA), valine and a polyketide. ACT-toxin I is toxic to both citrus and pear; toxin II the 5''-deoxy derivative of ACT-toxin I, is highly toxic to pear and slightly toxic to citrus. On cellular level, ACT-toxins affect plasma membrane of susceptible cells and cause a sudden increase in loss of K(+) after a few minutes of toxin treatment. The acyl-CoA ligase ACTT1, the hydrolase ACTT2, the enoyl-CoA hydratases ACTT3 and ACTT6, and the acyl-CoA synthetase ACTT5 are all involved in the biosynthesis of the AK-, AF- and ACT-toxin common 9,10-epoxy-8-hydroxy-9-methyl-decatrienoic acid (EDA) structural moiety. The exact role of each enzyme, and of additional enzymes identified within the AF-toxin clusters have still to be determined. On the other hand, ACTTS1 to ACTTS4 are specific to the tangerine pathotype. The function of ACTTS3 is to elongate the polyketide chain portion of ACT-toxin that is unique to this toxin. The enoyl-reductase ACTTS2 might complement the missing enoyl-reductase (ER) domain in ACTTS3 in the synthesis of the polyketide portion of ACT-toxin. The roles of the nonribosomal peptide synthetases-related proteins ACTTS1 and ACTTS4 have also still not been elucidated. This Alternaria alternata (Alternaria rot fungus) protein is Acyl-CoA synthetase ACTT5.